The primary structure comprises 304 residues: Dihydroorotate dehydrogenase B (NAD(+)), catalytic subunit (304 aa).

FMN contacts are provided by residues serine 21 and 45-46 (KA). Substrate-binding positions include lysine 45 and 69–73 (NAIGL). The FMN site is built by asparagine 99 and asparagine 127. Residue asparagine 127 participates in substrate binding. Residue cysteine 130 is the Nucleophile of the active site. FMN-binding residues include lysine 165 and isoleucine 191. 192–193 (NT) is a binding site for substrate. FMN is bound by residues glycine 217, 243–244 (GG), and 265–266 (GT).

The protein belongs to the dihydroorotate dehydrogenase family. Type 1 subfamily. Heterotetramer of 2 PyrK and 2 PyrD type B subunits. FMN serves as cofactor.

It localises to the cytoplasm. The catalysed reaction is (S)-dihydroorotate + NAD(+) = orotate + NADH + H(+). The protein operates within pyrimidine metabolism; UMP biosynthesis via de novo pathway; orotate from (S)-dihydroorotate (NAD(+) route): step 1/1. Catalyzes the conversion of dihydroorotate to orotate with NAD(+) as electron acceptor. This chain is Dihydroorotate dehydrogenase B (NAD(+)), catalytic subunit (pyrD), found in Listeria monocytogenes serotype 4b (strain CLIP80459).